We begin with the raw amino-acid sequence, 226 residues long: Ribonuclease 3 (226 aa).

Residues 7-129 (LARLSRTLGY…IIGAVYLDAN (123 aa)) enclose the RNase III domain. Mg(2+) is bound at residue glutamate 42. The active site involves aspartate 46. Mg(2+) contacts are provided by aspartate 115 and glutamate 118. Glutamate 118 is an active-site residue. The 71-residue stretch at 156 to 226 (DPKTILQEYL…AAQILELINK (71 aa)) folds into the DRBM domain.

The protein belongs to the ribonuclease III family. As to quaternary structure, homodimer. It depends on Mg(2+) as a cofactor.

Its subcellular location is the cytoplasm. It carries out the reaction Endonucleolytic cleavage to 5'-phosphomonoester.. Functionally, digests double-stranded RNA. Involved in the processing of primary rRNA transcript to yield the immediate precursors to the large and small rRNAs (23S and 16S). Processes some mRNAs, and tRNAs when they are encoded in the rRNA operon. Processes pre-crRNA and tracrRNA of type II CRISPR loci if present in the organism. The polypeptide is Ribonuclease 3 (Shewanella denitrificans (strain OS217 / ATCC BAA-1090 / DSM 15013)).